Consider the following 162-residue polypeptide: Endoribonuclease YbeY (162 aa).

Zn(2+) is bound by residues His128, His132, and His138.

Belongs to the endoribonuclease YbeY family. Requires Zn(2+) as cofactor.

The protein resides in the cytoplasm. Its function is as follows. Single strand-specific metallo-endoribonuclease involved in late-stage 70S ribosome quality control and in maturation of the 3' terminus of the 16S rRNA. The sequence is that of Endoribonuclease YbeY from Lactococcus lactis subsp. lactis (strain IL1403) (Streptococcus lactis).